We begin with the raw amino-acid sequence, 473 residues long: Rifampicin monooxygenase (473 aa).

FAD-binding residues include Thr-12, Glu-31, Lys-32, and Arg-41. Arg-43 contacts rifampicin. Residues Gln-98, Val-122, and Thr-156 each contribute to the FAD site. Position 196 (Arg-196) interacts with rifampicin. Asp-276 is a binding site for FAD. Residue Gly-285 participates in rifampicin binding. Residues Leu-289 and Asn-290 each contribute to the FAD site.

It belongs to the rifampicin monooxygenase family. Homodimer. Requires FAD as cofactor.

It catalyses the reaction rifampicin + NADPH + O2 = rifampicin para-naphthoquinone carboxamide + NADP(+) + H2O + H(+). The catalysed reaction is rifampicin + NADH + O2 = rifampicin para-naphthoquinone carboxamide + NAD(+) + H2O + H(+). In terms of biological role, monooxygenase that can modify rifampicin, thereby inactivating its antibiotic activity. It constitutes a secondary rifampicin resistance factor. This is Rifampicin monooxygenase from Nocardia farcinica (strain IFM 10152).